The primary structure comprises 267 residues: Tryptophan synthase alpha chain (267 aa).

Catalysis depends on proton acceptor residues Glu47 and Asp58.

This sequence belongs to the TrpA family. Tetramer of two alpha and two beta chains.

The enzyme catalyses (1S,2R)-1-C-(indol-3-yl)glycerol 3-phosphate + L-serine = D-glyceraldehyde 3-phosphate + L-tryptophan + H2O. It functions in the pathway amino-acid biosynthesis; L-tryptophan biosynthesis; L-tryptophan from chorismate: step 5/5. Its function is as follows. The alpha subunit is responsible for the aldol cleavage of indoleglycerol phosphate to indole and glyceraldehyde 3-phosphate. This chain is Tryptophan synthase alpha chain, found in Chlorobaculum tepidum (strain ATCC 49652 / DSM 12025 / NBRC 103806 / TLS) (Chlorobium tepidum).